A 745-amino-acid chain; its full sequence is Aminopeptidase NAALADL1 (745 aa).

Over Met-1–Ile-6 the chain is Cytoplasmic. A helical; Signal-anchor for type II membrane protein membrane pass occupies residues Leu-7–Ile-28. Residues Pro-29–Leu-745 lie on the Extracellular side of the membrane. N-linked (GlcNAc...) asparagine glycosylation is found at Asn-128, Asn-141, and Asn-235. Ca(2+) contacts are provided by Thr-263 and Leu-266. 3 N-linked (GlcNAc...) asparagine glycosylation sites follow: Asn-279, Asn-302, and Asn-329. Cysteines 301 and 318 form a disulfide. Residues His-373 and Asp-383 each coordinate Zn(2+). Glu-421 acts as the Proton donor/acceptor in catalysis. Residue Glu-422 coordinates Zn(2+). Ca(2+) is bound by residues Glu-430 and Glu-433. Asp-450 contributes to the Zn(2+) binding site. N-linked (GlcNAc...) asparagine glycans are attached at residues Asn-456 and Asn-497. Position 550 (His-550) interacts with Zn(2+). N-linked (GlcNAc...) asparagine glycosylation is found at Asn-593 and Asn-620.

It belongs to the peptidase M28 family. M28B subfamily. Homodimer. Requires Zn(2+) as cofactor. In terms of processing, N-glycosylated.

It localises to the apical cell membrane. Aminopeptidase with broad substrate specificity. Has lower activity with substrates that have Asp or Glu in the P2' position, or Pro in the P3' position. Lacks activity with substrates that have both Pro in the P3' position and Asp or Glu in the P2' position. Lacks carboxypeptidase activity. Lacks dipeptidyl-peptidase IV type activity. This is Aminopeptidase NAALADL1 (Naaladl1) from Mus musculus (Mouse).